We begin with the raw amino-acid sequence, 200 residues long: Large ribosomal subunit protein uL4 (200 aa).

The tract at residues Gly-38–Arg-68 is disordered. A compositionally biased stretch (basic residues) spans Gly-54–Gly-65.

The protein belongs to the universal ribosomal protein uL4 family. As to quaternary structure, part of the 50S ribosomal subunit.

Its function is as follows. One of the primary rRNA binding proteins, this protein initially binds near the 5'-end of the 23S rRNA. It is important during the early stages of 50S assembly. It makes multiple contacts with different domains of the 23S rRNA in the assembled 50S subunit and ribosome. Functionally, forms part of the polypeptide exit tunnel. This Pseudomonas savastanoi pv. phaseolicola (strain 1448A / Race 6) (Pseudomonas syringae pv. phaseolicola (strain 1448A / Race 6)) protein is Large ribosomal subunit protein uL4.